Here is a 359-residue protein sequence, read N- to C-terminus: Olfactory receptor 5T2 (359 aa).

Topologically, residues 1-64 are extracellular; the sequence is MSYSIYKSTV…GFTDNLELQT (64 aa). N-linked (GlcNAc...) asparagine glycosylation is present at Asn-44. The chain crosses the membrane as a helical span at residues 65–85; it reads IFFFLFLAIYLFTLMGNLGLI. The Cytoplasmic segment spans residues 86 to 93; it reads LVVIRDSQ. A helical transmembrane segment spans residues 94-114; the sequence is LHKPMYYFLSMLSSVDACYSS. The Extracellular segment spans residues 115 to 138; it reads VITPNMLVDFTTKNKVISFLGCVA. A helical transmembrane segment spans residues 139 to 159; that stretch reads QVFLACSFGTTECFLLAAMAY. The Cytoplasmic portion of the chain corresponds to 160–178; sequence DRYVAIYNPLLYSVSMSPR. A helical transmembrane segment spans residues 179-199; the sequence is VYMPLINASYVAGILHATIHT. At 200–235 the chain is on the extracellular side; the sequence is VATFSLSFCGANEIRRVFCDIPPLLAISYSDTHTNQ. Residues 236-256 traverse the membrane as a helical segment; it reads LLLFYFVGSIELVTILIVLIS. Residues 257–276 are Cytoplasmic-facing; the sequence is YGLILLAILKMYSAEGRRKV. Residues 277–297 form a helical membrane-spanning segment; that stretch reads FSTCGAHLTGVSIYYGTILFM. Topologically, residues 298 to 310 are extracellular; the sequence is YVRPSSSYASDHD. A helical transmembrane segment spans residues 311-331; that stretch reads MIVSIFYTIVIPLLNPVIYSL. The Cytoplasmic segment spans residues 332–359; that stretch reads RNKDVKDSMKKMFGKNQVINKVYFHTKK.

The protein belongs to the G-protein coupled receptor 1 family.

It is found in the cell membrane. Functionally, odorant receptor. The chain is Olfactory receptor 5T2 (OR5T2) from Homo sapiens (Human).